A 334-amino-acid chain; its full sequence is Ribosomal RNA small subunit methyltransferase H (334 aa).

S-adenosyl-L-methionine contacts are provided by residues Gly-53–His-55, Asp-72, Phe-99, Asp-122, and His-129.

It belongs to the methyltransferase superfamily. RsmH family.

Its subcellular location is the cytoplasm. The catalysed reaction is cytidine(1402) in 16S rRNA + S-adenosyl-L-methionine = N(4)-methylcytidine(1402) in 16S rRNA + S-adenosyl-L-homocysteine + H(+). Specifically methylates the N4 position of cytidine in position 1402 (C1402) of 16S rRNA. The chain is Ribosomal RNA small subunit methyltransferase H from Leptospira interrogans serogroup Icterohaemorrhagiae serovar copenhageni (strain Fiocruz L1-130).